A 99-amino-acid polypeptide reads, in one-letter code: Integration host factor subunit alpha (99 aa).

The interval 49–71 (FGNFDLRDKNQRPGRNPKTGEDI) is disordered.

It belongs to the bacterial histone-like protein family. In terms of assembly, heterodimer of an alpha and a beta chain.

This protein is one of the two subunits of integration host factor, a specific DNA-binding protein that functions in genetic recombination as well as in transcriptional and translational control. The polypeptide is Integration host factor subunit alpha (Shewanella denitrificans (strain OS217 / ATCC BAA-1090 / DSM 15013)).